A 301-amino-acid chain; its full sequence is UstYa family oxidase phomYd (301 aa).

The disordered stretch occupies residues 1 to 26 (MEKFFSPSRHNYADLSPTDVPASEES). A helical membrane pass occupies residues 47–69 (VLVNRLLAASTVALVMVSLWLGW). Short sequence motifs (HXXHC) lie at residues 189 to 194 (THSVHC) and 218 to 222 (HTDHC). N275 is a glycosylation site (N-linked (GlcNAc...) asparagine).

It belongs to the ustYa family.

The protein resides in the membrane. It participates in mycotoxin biosynthesis. UstYa family oxidase; part of the gene cluster that mediates the biosynthesis of the phomopsins, a group of hexapeptide mycotoxins which infects lupins and causes lupinosis disease in livestock. Within the pathway, phomYd catalyzes the desaturation of the Asp moiety into 2,3-dehydroaspartic acid (dAsp). The pathway starts with the processing of the precursor phomA by several endopeptidases including kexin proteases as well as the cluster-specific S41 family peptidase phomP1 and the oligopeptidase phomG to produce 10 identical copies of the hexapeptide Tyr-Val-Ile-Pro-Ile-Asp. After being excised from the precursor peptide, the core peptides are cyclized and modified post-translationally by enzymes encoded within the gene cluster. The timing and order of proteolysis of the phomA precursor and PTMs are still unknown. Two tyrosinase-like enzymes, phomQ1 and phomQ2, catalyze the chlorination and hydroxylation of Tyr, respectively. PhomYb, is proposed to be involved in the construction of the macrocyclic structure. The other 4 ustYa family proteins may be involved in PTMs that generate the unique structure of phomopsin A. PhomYa is required for the hydroxylation of C-beta of Tyr. PhomYc, phomYd, and phomYe are responsible for the biosynthesis of 2,3-dehydroisoleucine (dIle), 2,3-dehydroaspartic acid (dAsp), and 3,4-dehydroproline (dPro), respectively. While dIle formation by phomYc is indispensable for the installation of dAsp by phomYd, the order of the other PTMs have not been elucidated yet. Most of the biosynthetic enzymes likely have broad substrate specificity, and thus, there might be a metabolic grid from a precursor to phomopsin A. The enzyme(s) responsible for the biosynthesis of 3,4-dehydrovaline (dVal) have also not been identified yet. Finally, phomM acts as an S-adenosylmethionine-dependent alpha-N-methyltransferase that catalyzes two successive N-methylation reactions, converting N-desmethyl-phomopsin A to phomopsin A and phomopsin A further to an N,N-dimethylated congener called phomopsin E. This chain is UstYa family oxidase phomYd, found in Diaporthe leptostromiformis (Lupinosis disease fungus).